Here is a 119-residue protein sequence, read N- to C-terminus: MAATMQALLVIALLHLATATPVVTKHKVSTFSTGFLGHPVGGLGYGGLGYGGLGYGGLGVAGLGYGGLGYPGAALGGAYTHHAALGGLGYPLGIGAGVVAPHVVNSKIAAPLAPVVAAI.

Positions 1 to 19 (MAATMQALLVIALLHLATA) are cleaved as a signal peptide. 7 tandem repeats follow at residues 41-45 (GGLGY), 46-50 (GGLGY), 51-55 (GGLGY), 56-60 (GGLGV), 61-65 (AGLGY), 66-70 (GGLGY), and 86-90 (GGLGY). The interval 41-90 (GGLGYGGLGYGGLGYGGLGVAGLGYGGLGYPGAALGGAYTHHAALGGLGY) is 7 X 5 AA approximate repeats.

The polymeric lamprin chains self-aggregate to form fibers and have secondary structures particularly rich in beta-sheets and in beta-turns.

It is found in the secreted. It localises to the extracellular space. Its subcellular location is the extracellular matrix. Self-aggregating protein that is part of the soluble form of lamprin. This is Lamprin 1.8-10 from Petromyzon marinus (Sea lamprey).